The following is a 381-amino-acid chain: Dual-specificity RNA methyltransferase RlmN (381 aa).

Glu-95 functions as the Proton acceptor in the catalytic mechanism. The Radical SAM core domain occupies 101–339; sequence DGRRGTLCVS…MTTVRTTRGD (239 aa). The cysteines at positions 108 and 345 are disulfide-linked. [4Fe-4S] cluster is bound by residues Cys-115, Cys-119, and Cys-122. Residues 169-170, Ser-201, 223-225, and Asn-302 contribute to the S-adenosyl-L-methionine site; these read GE and SLH. The S-methylcysteine intermediate role is filled by Cys-345.

The protein belongs to the radical SAM superfamily. RlmN family. [4Fe-4S] cluster serves as cofactor.

The protein localises to the cytoplasm. It carries out the reaction adenosine(2503) in 23S rRNA + 2 reduced [2Fe-2S]-[ferredoxin] + 2 S-adenosyl-L-methionine = 2-methyladenosine(2503) in 23S rRNA + 5'-deoxyadenosine + L-methionine + 2 oxidized [2Fe-2S]-[ferredoxin] + S-adenosyl-L-homocysteine. It catalyses the reaction adenosine(37) in tRNA + 2 reduced [2Fe-2S]-[ferredoxin] + 2 S-adenosyl-L-methionine = 2-methyladenosine(37) in tRNA + 5'-deoxyadenosine + L-methionine + 2 oxidized [2Fe-2S]-[ferredoxin] + S-adenosyl-L-homocysteine. Functionally, specifically methylates position 2 of adenine 2503 in 23S rRNA and position 2 of adenine 37 in tRNAs. m2A2503 modification seems to play a crucial role in the proofreading step occurring at the peptidyl transferase center and thus would serve to optimize ribosomal fidelity. This Alcanivorax borkumensis (strain ATCC 700651 / DSM 11573 / NCIMB 13689 / SK2) protein is Dual-specificity RNA methyltransferase RlmN.